A 286-amino-acid chain; its full sequence is MKQYQDLIKDIFENGYETDDRTGTGTIALFGSKLRWDLTKGFPAVTTKKLAWKACIAELIWFLSGSTNVNDLRLIQHDSLIQGKTVWDENYENQAKDLGYHSGELGPIYGKQWRDFGGVDQIIEVIDRIKKLPNDRRQIVSAWNPAELKYMALPPCHMFYQFNVRNGYLDLQWYQRSVDVFLGLPFNIASYATLVHIVAKMCNLIPGDLIFSGGNTHIYMNHVEQCKEILRREPKELCELVISGLPYKFRYLSTKEQLKYVLKLRPKDFVLNNYVSHPPIKGKMAV.

DUMP-binding positions include Arg-21 and 136–137 (RR). The active-site Nucleophile is Cys-156. DUMP-binding positions include 176–179 (RSVD), Asn-187, and 217–219 (HIY). (6R)-5,10-methylene-5,6,7,8-tetrahydrofolate is bound at residue Asp-179. Ala-285 contributes to the (6R)-5,10-methylene-5,6,7,8-tetrahydrofolate binding site.

This sequence belongs to the thymidylate synthase family. As to quaternary structure, homodimer.

The enzyme catalyses dUMP + (6R)-5,10-methylene-5,6,7,8-tetrahydrofolate = 7,8-dihydrofolate + dTMP. It functions in the pathway pyrimidine metabolism; dTTP biosynthesis. This is Thymidylate synthase (TD) from Enterobacteria phage T4 (Bacteriophage T4).